Reading from the N-terminus, the 841-residue chain is mRNA export factor ICP27 homolog (841 aa).

2 disordered regions span residues 12–82 (PFAG…QYDK) and 115–163 (RAQG…TSPD). Low complexity predominate over residues 32–49 (YSQQQSQHYYYGHNQSSY). The span at 66 to 79 (MPPPLSSPSSPPPQ) shows a compositional bias: pro residues. Positions 132–147 (SSLVSSNNSNNNTTLS) are enriched in low complexity. Zn(2+)-binding residues include C298, H411, C413, and C418. Residues 298–418 (CLLDSPGGGG…PGHRCQNEIC (121 aa)) form a CHC2-type zinc finger. Disordered regions lie at residues 444–749 (HPNG…DDLH) and 774–811 (SVTPLAAPPSIRILDHEPGDAEEEEESDTDFYDETDQP). The segment covering 495–507 (VDSRGGGGDRRGD) has biased composition (basic and acidic residues). Positions 514–526 (NHHRHHTRRARTR) are enriched in basic residues. The segment covering 553-563 (RRGEAQRESNG) has biased composition (basic and acidic residues). Composition is skewed to low complexity over residues 568–579 (KSPSTVSSTTVH) and 591–603 (SRKSQQSQQQPET). A compositionally biased stretch (pro residues) spans 614–623 (MPPPPSPCSP). Over residues 641 to 657 (RPHDPPSGEPADAEKEL) the composition is skewed to basic and acidic residues. The segment covering 688–699 (DSSSSSSDSSSS) has biased composition (low complexity). Positions 708–731 (EDCRELDLQSKRLEEALEERCERD) are enriched in basic and acidic residues. Composition is skewed to acidic residues over residues 732–749 (FEADDEEFAEPIEEDDLH) and 793–809 (DAEEEEESDTDFYDETD).

This sequence belongs to the HHV-1 ICP27 protein family.

It is found in the virion tegument. The protein localises to the virion. The protein resides in the host nucleus. It localises to the host cytoplasm. Functionally, immediate early (EI) protein that plays many roles during productive infection including regulation of viral gene expression and nuclear export of intronless viral RNAs. The polypeptide is mRNA export factor ICP27 homolog (Mus musculus (Mouse)).